Consider the following 359-residue polypeptide: MALVPLRLLLDHAAENGYGIPAFNVNNLEQIQAILKAAAETDSPVILQASRGARNYAGENFLRHLILAAVETYPEIPIVMHQDHGNAPSTCYSAIKNNFTSVMMDGSLEADAKTPASFEYNVNVTREVVNVAHALGVSVEGELGCLGSLETGAGEAEDGHGFEGTLDHSQLLTDPDEAVNFVEATQVDALAVAIGTSHGAYKFTRKPTGEILAISRIEEIHRRLPNTHLVMHGSSSVPEDLIALINEYGGAIPETYGVPVEEIQKGIKSGVRKVNIDTDNRLAITAAVREALAKNPKEFDPRHFLKPSITYMQKVCAERYVQFGTAGNASKIKQVSLETFAAKYAKGELNAISKAAAKV.

Ser50 lines the D-glyceraldehyde 3-phosphate pocket. Asp83 serves as the catalytic Proton donor. Zn(2+) is bound by residues His84, Asp105, Glu142, and His198. Gly199 provides a ligand contact to dihydroxyacetone phosphate. Residue His232 coordinates Zn(2+). Dihydroxyacetone phosphate contacts are provided by residues 233–235 and 275–278; these read GSS and NIDT.

It depends on Zn(2+) as a cofactor.

The enzyme catalyses beta-D-fructose 1,6-bisphosphate = D-glyceraldehyde 3-phosphate + dihydroxyacetone phosphate. It functions in the pathway carbohydrate degradation; glycolysis; D-glyceraldehyde 3-phosphate and glycerone phosphate from D-glucose: step 4/4. Functionally, catalyzes the aldol condensation of dihydroxyacetone phosphate (DHAP or glycerone-phosphate) with glyceraldehyde 3-phosphate (G3P) to form fructose 1,6-bisphosphate (FBP) in gluconeogenesis and the reverse reaction in glycolysis. The chain is Fructose-bisphosphate aldolase from Nostoc sp. (strain PCC 7120 / SAG 25.82 / UTEX 2576).